The sequence spans 345 residues: uncharacterized protein (345 aa).

A CNNM transmembrane domain is found at 1–198 (MDVLSAVLLA…LSEGLLDHEE (198 aa)). 2 helical membrane-spanning segments follow: residues 3–23 (VLSA…FVGA) and 95–115 (VPPA…HVLL). CBS domains are found at residues 217-280 (AVPL…PQTV) and 285-342 (VVRP…MRDG). The helical transmembrane segment at 312 to 332 (LALVTADNGSVVGMVALEDVV) threads the bilayer.

It belongs to the TerC family.

It is found in the cell membrane. This is an uncharacterized protein from Mycobacterium tuberculosis (strain CDC 1551 / Oshkosh).